Reading from the N-terminus, the 175-residue chain is Transcription factor E (175 aa).

In terms of domain architecture, HTH TFE/IIEalpha-type spans 4–88 (AEDLFINLAK…YWKPNIDQIN (85 aa)).

Belongs to the TFE family. Monomer. Interaction with RNA polymerase subunits RpoF and RpoE is necessary for Tfe stimulatory transcription activity. Able to interact with Tbp and RNA polymerase in the absence of DNA promoter. Interacts both with the preinitiation and elongation complexes.

Its function is as follows. Transcription factor that plays a role in the activation of archaeal genes transcribed by RNA polymerase. Facilitates transcription initiation by enhancing TATA-box recognition by TATA-box-binding protein (Tbp), and transcription factor B (Tfb) and RNA polymerase recruitment. Not absolutely required for transcription in vitro, but particularly important in cases where Tbp or Tfb function is not optimal. It dynamically alters the nucleic acid-binding properties of RNA polymerases by stabilizing the initiation complex and destabilizing elongation complexes. Seems to translocate with the RNA polymerase following initiation and acts by binding to the non template strand of the transcription bubble in elongation complexes. This is Transcription factor E from Saccharolobus islandicus (strain Y.N.15.51 / Yellowstone #2) (Sulfolobus islandicus).